Here is a 393-residue protein sequence, read N- to C-terminus: Acetyl-CoA acetyltransferase (393 aa).

The Acyl-thioester intermediate role is filled by C88. Residues H349 and C379 each act as proton acceptor in the active site.

Belongs to the thiolase-like superfamily. Thiolase family. In terms of assembly, homotetramer.

Its subcellular location is the cytoplasm. The catalysed reaction is 2 acetyl-CoA = acetoacetyl-CoA + CoA. The protein operates within biopolymer metabolism; poly-(R)-3-hydroxybutanoate biosynthesis. The condensation reaction is inhibited by free CoA. The cleavage reaction is characterized by substrate inhibition by acetoacetyl-CoA, which is partially relieved by free CoA. Catalyzes the condensation of two acetyl-coA units to form acetoacetyl-CoA. Is involved in the biosynthesis of polyhydroxybutyrate (PHB), which is accumulated as an intracellular energy reserve material when cells grow under conditions of nutrient limitation. Also catalyzes the reverse reaction, i.e. the cleavage of acetoacetyl-CoA, and is therefore also involved in the reutilization of PHB. This is Acetyl-CoA acetyltransferase from Cupriavidus necator (strain ATCC 17699 / DSM 428 / KCTC 22496 / NCIMB 10442 / H16 / Stanier 337) (Ralstonia eutropha).